Reading from the N-terminus, the 1118-residue chain is MTDVSSPAGGAASPVEMSTTSSSSAATTSASSSKPLTNGANKTAISTAAGGVTPGAVPGPGSGAIPASSSSGNQVKLEHHHRQSNNNRPAVTNRSSETKLMTPTGSSSSPSQSPSQTQASIQTQTSQQDRLAKASTTASQQDVDEVARLFEEKPEAFEKWLTERAPPEALSRLQEFIENRKPHKRPSVTSDLFQQWMAASPTVQQKSPRSLSNSSASSLPECRRHLMDLDEGELFMELIRDVANELDIDVLCHKILVNVGLLTHADRGSLFLAKGTPTNKYLVAKLFDVTQKTALKDAVTRASAEEIIIPFGIGIAGMVAQTKQMINIKEAYKDARFNCEIDLKTGYKTNAILCMPICNYEGDIIGVAQIINKTNGCMEFDEHDVEIFRRYLTFCGIGIQNAQLFEMSVQEYRRNQILLNLARSIFEEQNNLECLVTKIMTEARELLKCERCSVFLVDLDCCEASHLEKIIEKPNQPATRAIKSADSFEEKKMRNRFTVLFELGGEYQAANVSRPSVSELSSSTLAQIAQFVATTGQTVNICDVIEWVRDHNQIRAEDEIDSTQAILCMPIMNAQKKVIGVAQLINKANGVPFTDSDASIFEAFAIFCGLGIHNTQMYENACKLMAKQKVALECLSYHATASQDQTEKLTQDVIAEAESYNLYSFTFTDFELVDDDTCRAVLRMFMQCNLVSQFQIPYDVLCRWVLSVRKNYRPVKYHNWRHALNVAQTMFAMLKTGKMERFMTDLEILGLLVACLCHDLDHRGTNNAFQTKTESPLAILYTTSTMEHHHFDQCVMILNSEGNNIFQALSPEDYRSVMKTVESAILSTDLAMYFKKRNAFLELVENGEFDWQGEEKKDLLCGMMMTACDVSAIAKPWEVQHKVAKLVADEFFDQGDLEKLQLNTQPVAMMDRERKDELPKMQVGFIDVICLPLYRVLCDTFPWITPLYEGTLENRRNWQDLAEKVEMGLTWIDHDTIDKPVEEFAACADEEIKDIEFTVTTLNCNQQSQHGSEDSHTPEHQRSGSRLSMKKTGALGKAVRSKLSKTLYNSMDGSKPKTSLKLLESHVSEDMDDKSPTSPSQPQASGSMGRMSASSSTSSAGGQMVDKSKKRSKLCALL.

Positions 1 to 142 (MTDVSSPAGG…KASTTASQQD (142 aa)) are disordered. Positions 18-33 (STTSSSSAATTSASSS) are enriched in low complexity. The segment covering 34–45 (KPLTNGANKTAI) has biased composition (polar residues). 2 stretches are compositionally biased toward low complexity: residues 46–56 (STAAGGVTPGA) and 63–72 (GAIPASSSSG). Over residues 84-101 (SNNNRPAVTNRSSETKLM) the composition is skewed to polar residues. Residues 102–128 (TPTGSSSSPSQSPSQTQASIQTQTSQQ) show a composition bias toward low complexity. 2 consecutive GAF domains span residues 247–399 (DIDV…GIGI) and 431–612 (NLEC…GLGI). The PDEase domain occupies 642–965 (SQDQTEKLTQ…RNWQDLAEKV (324 aa)). Histidine 718 (proton donor) is an active-site residue. Residues histidine 722, histidine 758, aspartate 759, and aspartate 869 each coordinate a divalent metal cation. Disordered regions lie at residues 1006-1035 (QQSQ…TGAL) and 1065-1118 (SHVS…CALL). Basic and acidic residues-rich tracts occupy residues 1011-1022 (GSEDSHTPEHQR) and 1065-1075 (SHVSEDMDDKS). The segment covering 1084-1104 (ASGSMGRMSASSSTSSAGGQM) has biased composition (low complexity). A compositionally biased stretch (basic residues) spans 1108–1118 (SKKRSKLCALL). Cysteine 1115 carries the post-translational modification Cysteine methyl ester. A lipid anchor (S-farnesyl cysteine) is attached at cysteine 1115. Positions 1116-1118 (ALL) are cleaved as a propeptide — removed in mature form.

Belongs to the cyclic nucleotide phosphodiesterase family. In terms of assembly, interacts with PrBP. Requires a divalent metal cation as cofactor. In terms of tissue distribution, expressed in Malpighian tubule principal cells. Also expressed in adult head.

It localises to the cell membrane. The enzyme catalyses 3',5'-cyclic GMP + H2O = GMP + H(+). With respect to regulation, inhibited by sildenafil and zaprinast. Its function is as follows. Hydrolyzes the second messenger cGMP, which is a key regulator of many important physiological processes. Has cAMP phosphodiesterase activity in vitro but not in vivo. Has a role regulating cGMP transport in Malpighian tubule principal cells. The polypeptide is cGMP-specific 3',5'-cyclic phosphodiesterase (Pde6) (Drosophila melanogaster (Fruit fly)).